A 173-amino-acid chain; its full sequence is Protein MOTHER of FT and TFL1 (173 aa).

Ala-2 is subject to N-acetylalanine.

This sequence belongs to the phosphatidylethanolamine-binding protein family. In terms of tissue distribution, expressed in gametophytes and developing seeds.

The protein localises to the cytoplasm. Functionally, may form complexes with phosphorylated ligands by interfering with kinases and their effectors. Regulates seed germination via the abscisic acid (ABA) and gibberellic acid (GA)signaling pathways. During seed germination, MFT expression is directly repressed by ABI3 or promoted by ABI5 in the ABA signaling pathway. Involved in a negative feedback regulation of ABA signaling. Promotes embryo growth by direct repression of ABI5. In the GA signaling pathway, MFT expression is promoted by the DELLA protein RGL2 during seed germination. May regulate seed germination and fertility through the brassinosteroid (BR) signaling pathway. This chain is Protein MOTHER of FT and TFL1 (MFT), found in Arabidopsis thaliana (Mouse-ear cress).